A 383-amino-acid chain; its full sequence is Succinyl-diaminopimelate desuccinylase (383 aa).

His72 lines the Zn(2+) pocket. The active site involves Asp74. Asp105 serves as a coordination point for Zn(2+). Glu137 (proton acceptor) is an active-site residue. Zn(2+)-binding residues include Glu138, Glu167, and His352.

It belongs to the peptidase M20A family. DapE subfamily. As to quaternary structure, homodimer. Requires Zn(2+) as cofactor. It depends on Co(2+) as a cofactor.

The enzyme catalyses N-succinyl-(2S,6S)-2,6-diaminopimelate + H2O = (2S,6S)-2,6-diaminopimelate + succinate. It functions in the pathway amino-acid biosynthesis; L-lysine biosynthesis via DAP pathway; LL-2,6-diaminopimelate from (S)-tetrahydrodipicolinate (succinylase route): step 3/3. Its function is as follows. Catalyzes the hydrolysis of N-succinyl-L,L-diaminopimelic acid (SDAP), forming succinate and LL-2,6-diaminopimelate (DAP), an intermediate involved in the bacterial biosynthesis of lysine and meso-diaminopimelic acid, an essential component of bacterial cell walls. The protein is Succinyl-diaminopimelate desuccinylase of Ehrlichia ruminantium (strain Gardel).